The primary structure comprises 130 residues: Histone H2A type 1-B/E (130 aa).

The disordered stretch occupies residues 1 to 22 (MSGRGKQGGKARAKAKTRSSRA). S2 carries the N-acetylserine modification. Phosphoserine; by RPS6KA5 is present on S2. R4 is modified (citrulline; alternate). Position 4 is a symmetric dimethylarginine; by PRMT5; alternate (R4). An N6-(2-hydroxyisobutyryl)lysine; alternate mark is found at K6 and K10. Residue K6 is modified to N6-acetyllysine; alternate. The span at 7 to 19 (QGGKARAKAKTRS) shows a compositional bias: basic residues. Residues K10 and K14 each carry the N6-(beta-hydroxybutyryl)lysine; alternate modification. K10 bears the N6-lactoyllysine; alternate mark. K10 carries the post-translational modification N6-succinyllysine; alternate. A Glycyl lysine isopeptide (Lys-Gly) (interchain with G-Cter in ubiquitin); alternate cross-link involves residue K14. K16 is covalently cross-linked (Glycyl lysine isopeptide (Lys-Gly) (interchain with G-Cter in ubiquitin)). N6-(2-hydroxyisobutyryl)lysine; alternate is present on K37. Residue K37 is modified to N6-(beta-hydroxybutyryl)lysine; alternate. At K37 the chain carries N6-crotonyllysine; alternate. An N6-(2-hydroxyisobutyryl)lysine mark is found at K75 and K76. Residue K96 is modified to N6-(2-hydroxyisobutyryl)lysine; alternate. K96 is subject to N6-(beta-hydroxybutyryl)lysine; alternate. K96 carries the post-translational modification N6-succinyllysine; alternate. N6-glutaryllysine; alternate is present on K96. An N5-methylglutamine modification is found at Q105. At K119 the chain carries N6-(2-hydroxyisobutyryl)lysine; alternate. K119 carries the post-translational modification N6-(beta-hydroxybutyryl)lysine; alternate. K119 and K120 each carry N6-crotonyllysine; alternate. K119 and K120 each carry N6-glutaryllysine; alternate. Residue K120 forms a Glycyl lysine isopeptide (Lys-Gly) (interchain with G-Cter in ubiquitin); alternate linkage. T121 carries the phosphothreonine; by DCAF1 modification. Residue K126 is modified to N6-crotonyllysine; alternate. K126 carries the N6-glutaryllysine; alternate modification.

Belongs to the histone H2A family. As to quaternary structure, the nucleosome is a histone octamer containing two molecules each of H2A, H2B, H3 and H4 assembled in one H3-H4 heterotetramer and two H2A-H2B heterodimers. The octamer wraps approximately 147 bp of DNA. Post-translationally, deiminated on Arg-4 in granulocytes upon calcium entry. Monoubiquitination of Lys-120 (H2AK119Ub) by RING1, TRIM37 and RNF2/RING2 complex gives a specific tag for epigenetic transcriptional repression and participates in X chromosome inactivation of female mammals. It is involved in the initiation of both imprinted and random X inactivation. Ubiquitinated H2A is enriched in inactive X chromosome chromatin. Ubiquitination of H2A functions downstream of methylation of 'Lys-27' of histone H3 (H3K27me). H2AK119Ub by RNF2/RING2 can also be induced by ultraviolet and may be involved in DNA repair. Monoubiquitination of Lys-120 (H2AK119Ub) by TRIM37 may promote transformation of cells in a number of breast cancers. Following DNA double-strand breaks (DSBs), it is ubiquitinated through 'Lys-63' linkage of ubiquitin moieties by the E2 ligase UBE2N and the E3 ligases RNF8 and RNF168, leading to the recruitment of repair proteins to sites of DNA damage. Ubiquitination at Lys-14 and Lys-16 (H2AK13Ub and H2AK15Ub, respectively) in response to DNA damage is initiated by RNF168 that mediates monoubiquitination at these 2 sites, and 'Lys-63'-linked ubiquitin are then conjugated to monoubiquitin; RNF8 is able to extend 'Lys-63'-linked ubiquitin chains in vitro. Deubiquitinated by USP51 at Lys-14 and Lys-16 (H2AK13Ub and H2AK15Ub, respectively) after damaged DNA is repaired. H2AK119Ub and ionizing radiation-induced 'Lys-63'-linked ubiquitination (H2AK13Ub and H2AK15Ub) are distinct events. In terms of processing, phosphorylation on Ser-2 (H2AS1ph) is enhanced during mitosis. Phosphorylation on Ser-2 by RPS6KA5/MSK1 directly represses transcription. Acetylation of H3 inhibits Ser-2 phosphorylation by RPS6KA5/MSK1. Phosphorylation at Thr-121 (H2AT120ph) by DCAF1 is present in the regulatory region of many tumor suppresor genes and down-regulates their transcription. Post-translationally, glutamine methylation at Gln-105 (H2AQ104me) by FBL is specifically dedicated to polymerase I. It is present at 35S ribosomal DNA locus and impairs binding of the FACT complex. Symmetric dimethylation on Arg-4 by the PRDM1/PRMT5 complex may play a crucial role in the germ-cell lineage. In terms of processing, crotonylation (Kcr) is specifically present in male germ cells and marks testis-specific genes in post-meiotic cells, including X-linked genes that escape sex chromosome inactivation in haploid cells. Crotonylation marks active promoters and enhancers and confers resistance to transcriptional repressors. It is also associated with post-meiotically activated genes on autosomes. Post-translationally, lactylated in macrophages by EP300/P300 by using lactoyl-CoA directly derived from endogenous or exogenous lactate, leading to stimulates gene transcription.

It localises to the nucleus. Its subcellular location is the chromosome. In terms of biological role, core component of nucleosome. Nucleosomes wrap and compact DNA into chromatin, limiting DNA accessibility to the cellular machineries which require DNA as a template. Histones thereby play a central role in transcription regulation, DNA repair, DNA replication and chromosomal stability. DNA accessibility is regulated via a complex set of post-translational modifications of histones, also called histone code, and nucleosome remodeling. The sequence is that of Histone H2A type 1-B/E from Homo sapiens (Human).